The chain runs to 495 residues: ATP synthase subunit beta, chloroplastic (495 aa).

Residue 172 to 179 (GGAGVGKT) coordinates ATP.

Belongs to the ATPase alpha/beta chains family. In terms of assembly, F-type ATPases have 2 components, CF(1) - the catalytic core - and CF(0) - the membrane proton channel. CF(1) has five subunits: alpha(3), beta(3), gamma(1), delta(1), epsilon(1). CF(0) has four main subunits: a(1), b(1), b'(1) and c(9-12).

The protein resides in the plastid. It localises to the chloroplast thylakoid membrane. It carries out the reaction ATP + H2O + 4 H(+)(in) = ADP + phosphate + 5 H(+)(out). Functionally, produces ATP from ADP in the presence of a proton gradient across the membrane. The catalytic sites are hosted primarily by the beta subunits. In Hyacinthoides non-scripta (English bluebell), this protein is ATP synthase subunit beta, chloroplastic.